Consider the following 201-residue polypeptide: Large ribosomal subunit protein uL4 (201 aa).

The tract at residues 45–71 (AQKTRAEVTGSGKKPWRQKGTGRARAG) is disordered.

It belongs to the universal ribosomal protein uL4 family. In terms of assembly, part of the 50S ribosomal subunit.

Its function is as follows. One of the primary rRNA binding proteins, this protein initially binds near the 5'-end of the 23S rRNA. It is important during the early stages of 50S assembly. It makes multiple contacts with different domains of the 23S rRNA in the assembled 50S subunit and ribosome. In terms of biological role, forms part of the polypeptide exit tunnel. This chain is Large ribosomal subunit protein uL4, found in Shewanella sp. (strain MR-4).